We begin with the raw amino-acid sequence, 373 residues long: MDTLEEVTWANGSTALPPPLAPNISVPHRCLLLLYEDIGTSRVRYWDLLLLIPNVLFLIFLLWKLPSARAKIRITSSPIFITFYILVFVVALVGIARAVVSMTVSTSNAATVADKILWEITRFFLLAIELSVIILGLAFGHLESKSSIKRVLAITTVLSLAYSVTQGTLEILYPDAHLSAEDFNIYGHGGRQFWLVSSCFFFLVYSLVVILPKTPLKERISLPSRRSFYVYAGILALLNLLQGLGSVLLCFDIIEGLCCVDATTFLYFSFFAPLIYVAFLRGFFGSEPKILFSYKCQVDETEEPDVHLPQPYAVARREGLEAAGAAGASAASYSSTQFDSAGGVAYLDDIASMPCHTGSINSTDSERWKAINA.

Asparagine 11 and asparagine 23 each carry an N-linked (GlcNAc...) asparagine glycan. Helical transmembrane passes span 48-68, 76-96, 123-143, 151-171, 192-212, 234-254, and 265-285; these read LLLL…LPSA, SSPI…VGIA, FFLL…GHLE, VLAI…TLEI, QFWL…VILP, ILAL…FDII, and FLYF…GFFG. Asparagine 361 is a glycosylation site (N-linked (GlcNAc...) asparagine).

Belongs to the UPF0359 family. In terms of tissue distribution, ubiquitous, with higher levels in heart, placenta and kidney.

It is found in the membrane. This is Transmembrane protein adipocyte-associated 1 (TPRA1) from Homo sapiens (Human).